We begin with the raw amino-acid sequence, 1732 residues long: Serine/threonine-protein kinase MRCK alpha (1732 aa).

Residues 77-343 (FEILKVIGRG…IEDFKKHPFF (267 aa)) enclose the Protein kinase domain. Residues 83-91 (IGRGAFGEV) and Lys106 contribute to the ATP site. Catalysis depends on Asp201, which acts as the Proton acceptor. A phosphoserine; by autocatalysis mark is found at Ser222 and Ser234. Thr240 is subject to Phosphothreonine; by autocatalysis. Residues 344–414 (SGIDWDNIRN…TSSCVLSDRS (71 aa)) enclose the AGC-kinase C-terminal domain. Coiled coils occupy residues 437 to 670 (NNLA…KQKQ), 713 to 820 (SEIK…WEAQ), and 880 to 943 (LELQ…SEKG). A disordered region spans residues 973 to 1002 (CTPAGKGRRIADSAPLPVHTPTLRKKGCPA). The Phorbol-ester/DAG-type zinc finger occupies 1012-1062 (THQFFVKSFTAPTKCHQCTSLMVGLIRQGCSCEVCGFSCHITCVNKAPTTC). Positions 1082–1201 (GTAYEGHVRI…WVGVLSELHK (120 aa)) constitute a PH domain. At Ser1127 the chain carries Phosphoserine. Positions 1227 to 1499 (IKTTQAAAII…RPLNTEGSLN (273 aa)) constitute a CNH domain. Ser1545 is modified (phosphoserine). The region spanning 1571–1584 (ISNPTNFNHIAHMG) is the CRIB domain. A disordered region spans residues 1592 to 1732 (LKDLPMNPRP…ESTDRGSWDP (141 aa)). Positions 1604–1619 (SRTVFSGSVSIPSITK) are enriched in polar residues. A phosphoserine mark is found at Ser1611, Ser1613, Ser1629, Ser1651, Ser1664, Ser1669, Ser1693, Ser1719, and Ser1721. The segment covering 1625 to 1640 (GRSMSASSGLSARSSA) has biased composition (low complexity). A compositionally biased stretch (low complexity) spans 1665–1674 (PSEGSLSSGG).

It belongs to the protein kinase superfamily. AGC Ser/Thr protein kinase family. DMPK subfamily. In terms of assembly, homodimer and homotetramer via the coiled coil regions. Interacts tightly with GTP-bound but not GDP-bound CDC42. Forms a tripartite complex with MYO18A and LURAP1 with the latter acting as an adapter connecting CDC42BPA and MYO18A. LURAP1 binding results in activation of CDC42BPA by abolition of its negative autoregulation. Interacts with LURAP1. Interacts (via AGC-kinase C-terminal domain) with FAM89B/LRAP25 (via LRR repeat). Forms a tripartite complex with FAM89B/LRAP25 and LIMK1. Requires Mg(2+) as cofactor. Proteolytically cleaved by caspases upon apoptosis induction. The cleavage at Asp-478 by CASP3 increases its kinase activity (in vitro). Highly expressed in the brain and lung and present in lower levels in all other tissues tested.

The protein localises to the cytoplasm. It is found in the cell projection. Its subcellular location is the lamellipodium. It catalyses the reaction L-seryl-[protein] + ATP = O-phospho-L-seryl-[protein] + ADP + H(+). The catalysed reaction is L-threonyl-[protein] + ATP = O-phospho-L-threonyl-[protein] + ADP + H(+). Its activity is regulated as follows. Maintained in an inactive, closed conformation by an interaction between the kinase domain and the negative autoregulatory C-terminal coiled-coil region. Agonist binding to the phorbol ester binding site disrupts this, releasing the kinase domain to allow N-terminus-mediated dimerization and kinase activation by transautophosphorylation. Inhibited by chelerythrine chloride. Serine/threonine-protein kinase which is an important downstream effector of CDC42 and plays a role in the regulation of cytoskeleton reorganization and cell migration. Regulates actin cytoskeletal reorganization via phosphorylation of PPP1R12A and MYL9/MLC2. In concert with MYO18A and LURAP1, is involved in modulating lamellar actomyosin retrograde flow that is crucial to cell protrusion and migration. Phosphorylates: PPP1R12C, LIMK1 and LIMK2. May play a role in TFRC-mediated iron uptake. In concert with FAM89B/LRAP25 mediates the targeting of LIMK1 to the lamellipodium resulting in its activation and subsequent phosphorylation of CFL1 which is important for lamellipodial F-actin regulation. Triggers the formation of an extrusion apical actin ring required for epithelial extrusion of apoptotic cells. This is Serine/threonine-protein kinase MRCK alpha from Rattus norvegicus (Rat).